The primary structure comprises 484 residues: Glycogen synthase 2 (484 aa).

ADP-alpha-D-glucose is bound at residue Arg15.

It belongs to the glycosyltransferase 1 family. Bacterial/plant glycogen synthase subfamily.

The catalysed reaction is [(1-&gt;4)-alpha-D-glucosyl](n) + ADP-alpha-D-glucose = [(1-&gt;4)-alpha-D-glucosyl](n+1) + ADP + H(+). Its pathway is glycan biosynthesis; glycogen biosynthesis. Synthesizes alpha-1,4-glucan chains using ADP-glucose. This Geobacter sulfurreducens (strain ATCC 51573 / DSM 12127 / PCA) protein is Glycogen synthase 2.